We begin with the raw amino-acid sequence, 432 residues long: Sensor histidine kinase YrkQ (432 aa).

Residues 1 to 12 (MAHLKFTLTKKL) lie on the Cytoplasmic side of the membrane. The chain crosses the membrane as a helical span at residues 13 to 33 (ALLIMVAAIVSGVIFLTLQKI). Residues 34-145 (TDDLIEGYLS…GFYSSRYYDL (112 aa)) are Extracellular-facing. The helical transmembrane segment at 146-166 (AFALDLLGATLIFLIIVLFGI) threads the bilayer. Positions 167–219 (RQSLRYLKTIHQEIHILEGGELDYEMTIKGHDELAMIAKSIEDLRKAFLDKLK) constitute an HAMP domain. The Cytoplasmic segment spans residues 167–432 (RQSLRYLKTI…IVLRFWNTKM (266 aa)). The Histidine kinase domain occupies 234 to 432 (EMSHDMRTPL…IVLRFWNTKM (199 aa)). His237 bears the Phosphohistidine; by autocatalysis mark.

It is found in the cell membrane. The enzyme catalyses ATP + protein L-histidine = ADP + protein N-phospho-L-histidine.. Its function is as follows. Member of the two-component regulatory system YrkQ/YrkP. Probably activates YrkP by phosphorylation. This is Sensor histidine kinase YrkQ (yrkQ) from Bacillus subtilis (strain 168).